The following is a 350-amino-acid chain: S-adenosylmethionine:tRNA ribosyltransferase-isomerase (350 aa).

This sequence belongs to the QueA family. Monomer.

The protein resides in the cytoplasm. It carries out the reaction 7-aminomethyl-7-carbaguanosine(34) in tRNA + S-adenosyl-L-methionine = epoxyqueuosine(34) in tRNA + adenine + L-methionine + 2 H(+). Its pathway is tRNA modification; tRNA-queuosine biosynthesis. Transfers and isomerizes the ribose moiety from AdoMet to the 7-aminomethyl group of 7-deazaguanine (preQ1-tRNA) to give epoxyqueuosine (oQ-tRNA). The sequence is that of S-adenosylmethionine:tRNA ribosyltransferase-isomerase from Vibrio vulnificus (strain YJ016).